Here is a 243-residue protein sequence, read N- to C-terminus: Protein GID8 homolog (243 aa).

The 33-residue stretch at 40 to 72 (RKEDMNTLVMNFLVTEGYVEAAEKFQRESGTKP) folds into the LisH domain. One can recognise a CTLH domain in the interval 78–135 (TITDRMAVKKAVQNGNVEDAIEKVNDLNPEILDTNPELFFHLQQQRLIELIRQGKTEE).

This sequence belongs to the GID8 family. As to quaternary structure, interacts with RANBPM.

The protein localises to the cytoplasm. The chain is Protein GID8 homolog from Arabidopsis thaliana (Mouse-ear cress).